The primary structure comprises 120 residues: Large ribosomal subunit protein uL18 (120 aa).

The span at 1–10 shows a compositional bias: basic and acidic residues; the sequence is MKLTRRESKE. The tract at residues 1–26 is disordered; sequence MKLTRRESKERRHRRVRGKVQGSPER.

It belongs to the universal ribosomal protein uL18 family. Part of the 50S ribosomal subunit; part of the 5S rRNA/L5/L18/L25 subcomplex. Contacts the 5S and 23S rRNAs.

This is one of the proteins that bind and probably mediate the attachment of the 5S RNA into the large ribosomal subunit, where it forms part of the central protuberance. This Nostoc sp. (strain PCC 7120 / SAG 25.82 / UTEX 2576) protein is Large ribosomal subunit protein uL18.